A 259-amino-acid chain; its full sequence is 5'-nucleotidase SurE (259 aa).

Residues D8, D9, S40, and N92 each contribute to the a divalent metal cation site.

Belongs to the SurE nucleotidase family. A divalent metal cation serves as cofactor.

It localises to the cytoplasm. It carries out the reaction a ribonucleoside 5'-phosphate + H2O = a ribonucleoside + phosphate. Nucleotidase that shows phosphatase activity on nucleoside 5'-monophosphates. The sequence is that of 5'-nucleotidase SurE from Xanthomonas campestris pv. campestris (strain 8004).